Here is a 551-residue protein sequence, read N- to C-terminus: E3 ubiquitin-protein ligase TRIM8 (551 aa).

An RING-type zinc finger spans residues 15–56 (CPICLHVFVEPVQLPCKHNFCRGCIGEAWAKDSGLVRCPECN). 2 consecutive B box-type zinc fingers follow at residues 92–132 (CVFC…ARGH) and 140–182 (VRAW…VCDV). Coiled coils occupy residues 181–249 (DVEI…DLRQ) and 274–295 (ERMQ…KTED). The segment at 399 to 457 (QYGAAGTASSEGQSGQPLGPCSSTQHLVALPGGTQPVHSSPVFPPSQYPNGSTTQQPML) is disordered. Polar residues-rich tracts occupy residues 405–424 (TASS…STQH) and 446–456 (YPNGSTTQQPM).

The protein belongs to the TRIM/RBCC family. As to quaternary structure, homodimer. Interacts with SOCS1 (via) SH2 domain and SOCS box. Interacts with HSP90AB1; prevents nucleus translocation of phosphorylated STAT3 and HSP90AB1. Interacts with MAP3K7/TAK1. Interacts with PIAS3. Interacts with TICAM1. Interacts with TRIM15; this interaction prevents TRIM8 cytoplasmic translocation. High expression in heart, liver, and thymus. Expressed in embryonic CNS, kidney, lens and gut.

The enzyme catalyses S-ubiquitinyl-[E2 ubiquitin-conjugating enzyme]-L-cysteine + [acceptor protein]-L-lysine = [E2 ubiquitin-conjugating enzyme]-L-cysteine + N(6)-ubiquitinyl-[acceptor protein]-L-lysine.. It functions in the pathway protein modification; protein ubiquitination. E3 ubiquitin-protein ligase that participates in multiple biological processes including cell survival, differentiation, apoptosis, and in particular, the innate immune response. Participates in the activation of interferon-gamma signaling by promoting proteasomal degradation of the repressor SOCS1. Plays a positive role in the TNFalpha and IL-1beta signaling pathways. Mechanistically, induces the 'Lys-63'-linked polyubiquitination of MAP3K7/TAK1 component leading to the activation of NF-kappa-B. Also modulates STAT3 activity through negative regulation of PIAS3, either by degradation of PIAS3 through the ubiquitin-proteasome pathway or exclusion of PIAS3 from the nucleus. Negatively regulates TLR3/4-mediated innate immune response by catalyzing 'Lys-6'- and 'Lys-33'-linked polyubiquitination of TICAM1 and thereby disrupting the TICAM1-TBK1 interaction. The polypeptide is E3 ubiquitin-protein ligase TRIM8 (Trim8) (Mus musculus (Mouse)).